The chain runs to 192 residues: Pyridoxal 5'-phosphate synthase subunit PdxT (192 aa).

46–48 (GES) provides a ligand contact to L-glutamine. The active-site Nucleophile is Cys76. L-glutamine-binding positions include Arg103 and 131–132 (IR). Active-site charge relay system residues include His167 and Glu169.

This sequence belongs to the glutaminase PdxT/SNO family. In terms of assembly, in the presence of PdxS, forms a dodecamer of heterodimers. Only shows activity in the heterodimer.

It catalyses the reaction aldehydo-D-ribose 5-phosphate + D-glyceraldehyde 3-phosphate + L-glutamine = pyridoxal 5'-phosphate + L-glutamate + phosphate + 3 H2O + H(+). The catalysed reaction is L-glutamine + H2O = L-glutamate + NH4(+). It participates in cofactor biosynthesis; pyridoxal 5'-phosphate biosynthesis. Its function is as follows. Catalyzes the hydrolysis of glutamine to glutamate and ammonia as part of the biosynthesis of pyridoxal 5'-phosphate. The resulting ammonia molecule is channeled to the active site of PdxS. The sequence is that of Pyridoxal 5'-phosphate synthase subunit PdxT from Koribacter versatilis (strain Ellin345).